A 374-amino-acid chain; its full sequence is Putative F-box protein At3g16590 (374 aa).

In terms of domain architecture, F-box spans 1-45 (MPTKLPLELEDEILLRVPPLSLTRFRTVCKRWNTLFNDQRFINNH).

The polypeptide is Putative F-box protein At3g16590 (Arabidopsis thaliana (Mouse-ear cress)).